A 156-amino-acid chain; its full sequence is Small ribosomal subunit protein uS7 (156 aa).

Belongs to the universal ribosomal protein uS7 family. Part of the 30S ribosomal subunit. Contacts proteins S9 and S11.

Functionally, one of the primary rRNA binding proteins, it binds directly to 16S rRNA where it nucleates assembly of the head domain of the 30S subunit. Is located at the subunit interface close to the decoding center, probably blocks exit of the E-site tRNA. This Prochlorococcus marinus (strain MIT 9301) protein is Small ribosomal subunit protein uS7.